Here is a 737-residue protein sequence, read N- to C-terminus: Elongation factor 2 (737 aa).

Positions 18-262 constitute a tr-type G domain; it reads TRVRNIGIIA…TVIKFVPNPR (245 aa). GTP contacts are provided by residues 27-34, 93-97, and 147-150; these read AHVDHGKT, DTPGH, and NKVD. H604 carries the diphthamide modification.

The protein belongs to the TRAFAC class translation factor GTPase superfamily. Classic translation factor GTPase family. EF-G/EF-2 subfamily.

It localises to the cytoplasm. Functionally, catalyzes the GTP-dependent ribosomal translocation step during translation elongation. During this step, the ribosome changes from the pre-translocational (PRE) to the post-translocational (POST) state as the newly formed A-site-bound peptidyl-tRNA and P-site-bound deacylated tRNA move to the P and E sites, respectively. Catalyzes the coordinated movement of the two tRNA molecules, the mRNA and conformational changes in the ribosome. The chain is Elongation factor 2 (fusA) from Sulfurisphaera tokodaii (strain DSM 16993 / JCM 10545 / NBRC 100140 / 7) (Sulfolobus tokodaii).